A 285-amino-acid chain; its full sequence is Sulfotransferase 2A2 (285 aa).

Positions 44, 45, 46, 47, 48, and 49 each coordinate 3'-phosphoadenylyl sulfate. The Proton acceptor role is filled by histidine 99. 3'-phosphoadenylyl sulfate-binding residues include arginine 121, serine 129, tyrosine 184, serine 218, arginine 247, lysine 248, and glycine 249.

It belongs to the sulfotransferase 1 family. Detected in liver.

The protein resides in the cytoplasm. The catalysed reaction is an alcohol + 3'-phosphoadenylyl sulfate = an alkyl sulfate + adenosine 3',5'-bisphosphate + H(+). Its function is as follows. Sulfotransferase that utilizes 3'-phospho-5'-adenylyl sulfate (PAPS) as sulfonate donor to catalyze the sulfate conjugation of a potential wide variety of acceptor molecules bearing a hydroxyl group. Sulfonation increases the water solubility of most compounds, and therefore their renal excretion, but it can also result in bioactivation to form active metabolites. This is Sulfotransferase 2A2 from Rattus norvegicus (Rat).